The following is a 45-amino-acid chain: HADGMFNKAYRKALGQLSARKYLHTLMAKRVGGGSMIEDDNEPLS.

Belongs to the glucagon family.

The protein resides in the secreted. In terms of biological role, GRF is released by the hypothalamus and acts on the adenohypophyse to stimulate the secretion of growth hormone. This Cyprinus carpio (Common carp) protein is Somatoliberin (ghrh).